A 128-amino-acid polypeptide reads, in one-letter code: Con-Ins F2c (128 aa).

The N-terminal stretch at 1–24 (MTTSSYFLLVALGLLLYVCRSSFG) is a signal peptide. 4 cysteine pairs are disulfide-bonded: Cys29–Cys104, Cys41–Cys107, Cys53–Cys120, and Cys106–Cys111. Positions 59–89 (LQGGTGKKRGRASLLRKRRAFLSMLKARAKR) are cleaved as a propeptide — c peptide. The residue at position 115 (Glu115) is a 4-carboxyglutamate; partial. The residue at position 127 (Ser127) is a Serine amide.

It belongs to the insulin family. Heterodimer of A and B chains; disulfide-linked. As to expression, expressed by the venom gland.

It is found in the secreted. Functionally, this venom insulin facilitates prey capture by rapidly inducing hypoglycemic shock. Intraperitoneal injection of this peptide into zebrafish lowers blood glucose with the same potency than human insulin. In vivo, when applied to water, this peptide reduces overall locomotor activity of zebrafish larvae, observed as a significant decrease in the percentage of time spent swimming and movement frequency. This chain is Con-Ins F2c, found in Conus floridulus (Cone snail).